The following is a 373-amino-acid chain: MVKFQIEKKTLLGRLGKIDTWGSVEVNHQTPSFQTYLRAGHIPHLTWEVAENQLKLEQTHIFQMTLPTLVSNAKIIEKFGKGAAKFCGMPAGAAVHLTPFDPLGKLPGGYNDSKSVAIWTANGKVSLDVKMWREIINSFGCGSIETLVDYDTPKDVGQKKLVKAVDRTKTFQEQLFQQDEKVNGERIVSLGGGFSKYHRRKCAVDVGLAENIAGYTVEFREFTEGKETDDKEMKELLEETFSPLPPTKLRCISGPFNPKTVLFLVQQGIDLFDSSFPVKLAEEGHAFCLSDDFPTSSKYEVVDFNNEKFADDFTALFDGCACYTCTKYTKGYLQHLLNTRELLASILLVIHNMTEYDKMFKLIRSSLENSEGL.

Positions 320, 322, 325, and 351 each coordinate Zn(2+).

This sequence belongs to the queuine tRNA-ribosyltransferase family. QTRT2 subfamily. In terms of assembly, heterodimer of a catalytic subunit and an accessory subunit. The cofactor is Zn(2+).

The protein resides in the cytoplasm. In terms of biological role, non-catalytic subunit of the queuine tRNA-ribosyltransferase (TGT) that catalyzes the base-exchange of a guanine (G) residue with queuine (Q) at position 34 (anticodon wobble position) in tRNAs with GU(N) anticodons (tRNA-Asp, -Asn, -His and -Tyr), resulting in the hypermodified nucleoside queuosine (7-(((4,5-cis-dihydroxy-2-cyclopenten-1-yl)amino)methyl)-7-deazaguanosine). The protein is Queuine tRNA-ribosyltransferase accessory subunit 2 of Caenorhabditis elegans.